A 294-amino-acid polypeptide reads, in one-letter code: MQARFHTSWAELPASLQFALEPILSAENFPAMLTAEQVKTVKNISGLDDDALAFALLPLATACALTPISHFNVGAIARGKSGNFYFGANMEFRGVPLQQTIHAEQCAVTHAWLRGETNLVAITVNYTPCGHCRQFMNELNSGSELHIHLPGRPPSTLGQYLPDSFGPTDLAITTLLMDPVNHGYTLAETDPLTQAALNAANHSHAPYSQSHSGVALETTNGKIYAGRYAENAAFNPSLPPLQAALILANITGENCASIRRAVLVEGHNAVTSQWDTTLATLNALGCSAVKRVTF.

2 consecutive CMP/dCMP-type deaminase domains span residues 48 to 168 (DDDA…FGPT) and 187 to 294 (AETD…RVTF). Residue 89-91 (NME) coordinates substrate. H102 contributes to the Zn(2+) binding site. The active-site Proton donor is the E104. Residues C129 and C132 each contribute to the Zn(2+) site.

It belongs to the cytidine and deoxycytidylate deaminase family. In terms of assembly, homodimer. The cofactor is Zn(2+).

The enzyme catalyses cytidine + H2O + H(+) = uridine + NH4(+). It catalyses the reaction 2'-deoxycytidine + H2O + H(+) = 2'-deoxyuridine + NH4(+). Functionally, this enzyme scavenges exogenous and endogenous cytidine and 2'-deoxycytidine for UMP synthesis. The chain is Cytidine deaminase from Yersinia pseudotuberculosis serotype O:1b (strain IP 31758).